The following is an 86-amino-acid chain: Exodeoxyribonuclease 7 small subunit (86 aa).

A disordered region spans residues 1 to 26 (MQDELFETEKAPQKNAKNAKNAPKKS).

This sequence belongs to the XseB family. As to quaternary structure, heterooligomer composed of large and small subunits.

Its subcellular location is the cytoplasm. It catalyses the reaction Exonucleolytic cleavage in either 5'- to 3'- or 3'- to 5'-direction to yield nucleoside 5'-phosphates.. In terms of biological role, bidirectionally degrades single-stranded DNA into large acid-insoluble oligonucleotides, which are then degraded further into small acid-soluble oligonucleotides. This Helicobacter pylori (strain J99 / ATCC 700824) (Campylobacter pylori J99) protein is Exodeoxyribonuclease 7 small subunit.